We begin with the raw amino-acid sequence, 686 residues long: Acyl-CoA synthetase short-chain family member 3, mitochondrial (686 aa).

The transit peptide at M1–G29 directs the protein to the mitochondrion. E226–R229 provides a ligand contact to CoA. ATP is bound by residues G424–R426 and D445–T450. K517 is subject to N6-succinyllysine. K523 carries the N6-acetyllysine modification. The ATP site is built by D538, R553, and R564. R623 contributes to the CoA binding site.

The protein belongs to the ATP-dependent AMP-binding enzyme family.

The protein localises to the mitochondrion matrix. It catalyses the reaction acetate + ATP + CoA = acetyl-CoA + AMP + diphosphate. The enzyme catalyses propanoate + ATP + CoA = propanoyl-CoA + AMP + diphosphate. The catalysed reaction is butanoate + ATP + CoA = butanoyl-CoA + AMP + diphosphate. In terms of biological role, catalyzes the synthesis of acetyl-CoA from short-chain fatty acids. Propionate is the preferred substrate but can also utilize acetate and butyrate with a much lower affinity. In Bos taurus (Bovine), this protein is Acyl-CoA synthetase short-chain family member 3, mitochondrial (ACSS3).